Reading from the N-terminus, the 57-residue chain is Protein translocase subunit SecE (57 aa).

The helical transmembrane segment at 33–53 (GAGIFLVGLLGFIIFAVMSFL) threads the bilayer.

It belongs to the SecE/SEC61-gamma family. Component of the Sec protein translocase complex. Heterotrimer consisting of SecY (alpha), SecG (beta) and SecE (gamma) subunits. The heterotrimers can form oligomers, although 1 heterotrimer is thought to be able to translocate proteins. Interacts with the ribosome. May interact with SecDF, and other proteins may be involved.

The protein localises to the cell membrane. Functionally, essential subunit of the Sec protein translocation channel SecYEG. Clamps together the 2 halves of SecY. May contact the channel plug during translocation. The protein is Protein translocase subunit SecE of Haloferax mediterranei (strain ATCC 33500 / DSM 1411 / JCM 8866 / NBRC 14739 / NCIMB 2177 / R-4) (Halobacterium mediterranei).